A 153-amino-acid chain; its full sequence is UPF0540 protein At1g62220 (153 aa).

Residues 1 to 21 (MNATKFVVLLVISVLCAIVTA) form the signal peptide. Disordered regions lie at residues 63-82 (SSATGFNNPKGPDANAYENG) and 122-153 (ARANGKVASASRVKGSSEKKKGKGKKGKGKKD). Over residues 122-132 (ARANGKVASAS) the composition is skewed to low complexity. A compositionally biased stretch (basic residues) spans 141–153 (KKGKGKKGKGKKD).

This sequence belongs to the UPF0540 family.

This chain is UPF0540 protein At1g62220, found in Arabidopsis thaliana (Mouse-ear cress).